A 419-amino-acid chain; its full sequence is Gamma-glutamyl phosphate reductase (419 aa).

The protein belongs to the gamma-glutamyl phosphate reductase family.

It localises to the cytoplasm. It carries out the reaction L-glutamate 5-semialdehyde + phosphate + NADP(+) = L-glutamyl 5-phosphate + NADPH + H(+). The protein operates within amino-acid biosynthesis; L-proline biosynthesis; L-glutamate 5-semialdehyde from L-glutamate: step 2/2. Functionally, catalyzes the NADPH-dependent reduction of L-glutamate 5-phosphate into L-glutamate 5-semialdehyde and phosphate. The product spontaneously undergoes cyclization to form 1-pyrroline-5-carboxylate. This chain is Gamma-glutamyl phosphate reductase, found in Mannheimia succiniciproducens (strain KCTC 0769BP / MBEL55E).